The sequence spans 221 residues: Sugar transporter SWEET1 (221 aa).

7 helical membrane passes run 3–23, 42–62, 68–88, 96–116, 129–149, 160–180, and 186–206; these read AGGF…LGMF, VQFL…SYGA, ILIV…LAYL, VVLL…GYFW, LGLF…ADLA, LSYP…LYGF, and YIMV…WLFW. Positions 10–94 constitute a MtN3/slv 1 domain; sequence LIYGACVVFT…LAYLHYCPRK (85 aa). The region spanning 127 to 212 is the MtN3/slv 2 domain; it reads QQLGLFCSVF…WLFWKYPQEQ (86 aa). The segment at 149–221 is mediates interaction with TRPV2; the sequence is AKVIQTKSTQ…QDRNYWLLQT (73 aa).

Belongs to the SWEET sugar transporter family. As to quaternary structure, interacts with TRPV2; the interaction probably occurs intracellularly and depends on TRPV2 N-glycosylation. In terms of tissue distribution, ubiquitously expressed with highest expression in oviduct, epididymis and intestine.

Its subcellular location is the golgi apparatus membrane. The protein resides in the cell membrane. Mediates sugar transport across membranes. May stimulate V(D)J recombination by the activation of RAG1. The sequence is that of Sugar transporter SWEET1 (SLC50A1) from Homo sapiens (Human).